The sequence spans 473 residues: Mitochondrial distribution and morphology protein 10 (473 aa).

It belongs to the MDM10 family. Component of the ER-mitochondria encounter structure (ERMES) or MDM complex, composed of MMM1, MDM10, MDM12 and MDM34. Associates with the mitochondrial outer membrane sorting assembly machinery SAM(core) complex.

The protein localises to the mitochondrion outer membrane. Component of the ERMES/MDM complex, which serves as a molecular tether to connect the endoplasmic reticulum and mitochondria. Components of this complex are involved in the control of mitochondrial shape and protein biogenesis and may function in phospholipid exchange. MDM10 is involved in the late assembly steps of the general translocase of the mitochondrial outer membrane (TOM complex). Functions in the TOM40-specific route of the assembly of outer membrane beta-barrel proteins, including the association of TOM40 with the receptor TOM22 and small TOM proteins. Can associate with the SAM(core) complex as well as the MDM12-MMM1 complex, both involved in late steps of the major beta-barrel assembly pathway, that is responsible for biogenesis of all outer membrane beta-barrel proteins. May act as a switch that shuttles between both complexes and channels precursor proteins into the TOM40-specific pathway. Plays a role in mitochondrial morphology and in the inheritance of mitochondria. The protein is Mitochondrial distribution and morphology protein 10 of Candida albicans (strain SC5314 / ATCC MYA-2876) (Yeast).